Here is a 189-residue protein sequence, read N- to C-terminus: MKNLFLIIGAPGSGKTTDASLIAQHDEKFAHFSTGDLLRAEVASGSELGKLIDGFISKGNLVPLDVVVNAIVSAIKSSNKSNIIIDGYPRSVEQMTELDKVLSEQDEISLKGVIEVDVSEDVARARVLGRARGADDNNEVFNNRMKVYLDPIKPIRKFYSEKELLHVVNGERGIDEIVADIKNLLAKLI.

An ATP-binding site is contributed by 12–17; that stretch reads GSGKTT. Positions 33–62 are NMP; sequence STGDLLRAEVASGSELGKLIDGFISKGNLV. AMP contacts are provided by residues Thr-34, Arg-39, 60–62, 87–90, and Gln-94; these read NLV and GYPR. Positions 129–135 are LID; that stretch reads GRARGAD. Residue Arg-130 coordinates ATP. AMP-binding residues include Arg-132 and Arg-144. ATP is bound at residue Arg-172.

The protein belongs to the adenylate kinase family. Monomer.

Its subcellular location is the cytoplasm. It catalyses the reaction AMP + ATP = 2 ADP. It participates in purine metabolism; AMP biosynthesis via salvage pathway; AMP from ADP: step 1/1. Functionally, catalyzes the reversible transfer of the terminal phosphate group between ATP and AMP. Plays an important role in cellular energy homeostasis and in adenine nucleotide metabolism. This chain is Adenylate kinase, found in Campylobacter concisus (strain 13826).